The primary structure comprises 79 residues: Putative membrane protein insertion efficiency factor (79 aa).

It belongs to the UPF0161 family.

It is found in the cell inner membrane. Functionally, could be involved in insertion of integral membrane proteins into the membrane. The chain is Putative membrane protein insertion efficiency factor from Rippkaea orientalis (strain PCC 8801 / RF-1) (Cyanothece sp. (strain PCC 8801)).